A 341-amino-acid polypeptide reads, in one-letter code: L-threonine 3-dehydrogenase (341 aa).

Residue cysteine 38 coordinates Zn(2+). Catalysis depends on charge relay system residues threonine 40 and histidine 43. Residues histidine 63, glutamate 64, cysteine 93, cysteine 96, cysteine 99, and cysteine 107 each contribute to the Zn(2+) site. NAD(+) is bound by residues isoleucine 175, aspartate 195, arginine 200, 262-264, and 286-287; these read LGI and IY.

This sequence belongs to the zinc-containing alcohol dehydrogenase family. In terms of assembly, homotetramer. Zn(2+) serves as cofactor.

The protein localises to the cytoplasm. It catalyses the reaction L-threonine + NAD(+) = (2S)-2-amino-3-oxobutanoate + NADH + H(+). The protein operates within amino-acid degradation; L-threonine degradation via oxydo-reductase pathway; glycine from L-threonine: step 1/2. Catalyzes the NAD(+)-dependent oxidation of L-threonine to 2-amino-3-ketobutyrate. The polypeptide is L-threonine 3-dehydrogenase (Salmonella typhi).